Here is a 256-residue protein sequence, read N- to C-terminus: Putative transposase for insertion sequence element IS112 (256 aa).

This sequence belongs to the transposase 11 family.

Its function is as follows. Involved in the transposition of the insertion sequence IS112 which inactivates the SalI restriction-modification system. This Streptomyces albus G protein is Putative transposase for insertion sequence element IS112.